Reading from the N-terminus, the 585-residue chain is FAD-linked oxidoreductase apf9 (585 aa).

A signal peptide spans 1–19; that stretch reads MKPHTVSLVLSNLASLAAA. Residues Asn-40, Asn-92, and Asn-117 are each glycosylated (N-linked (GlcNAc...) asparagine). An FAD-binding PCMH-type domain is found at 108 to 294; that stretch reads IGNSPVYVVN…TEITVKTYPT (187 aa). Residue His-145 is modified to Pros-8alpha-FAD histidine. Residues Asn-352, Asn-412, and Asn-495 are each glycosylated (N-linked (GlcNAc...) asparagine).

The protein belongs to the oxygen-dependent FAD-linked oxidoreductase family. FAD is required as a cofactor.

The protein operates within secondary metabolite biosynthesis. Its function is as follows. FAD-linked oxidoreductase; part of the gene cluster that mediates the biosynthesis of the cyclic tetrapeptide apicidin F (APF). The non-ribosomal peptide synthetase apf1 incorporates four different amino acids to produce apicidin F: L-phenylalanine, D-pipecolic acid (D-pip), N-methoxy-L-tryptophan and L-2-aminooctanedioic acid. L-Phenylalanine is the only proteinogenic amino acid directly used by apf1. The 3 other apf1 substrates are non-proteinogenic and have to be modified by other enzymes of the cluster. Lysine is converted to delta-1-pyrroline-5-carboxylate (P5C) which is reduced to L-pipecolic acid (L-pip) by apf3. L-pip is epimerized to D-pip, probably by apf1 activity, prior to incorporation. L-Tryptophan is N-oxidyzed by one of the cytochrome P450 monooxygenases (apf7 or apf8), and further methylated at the hydroxy group by the O-methyltransferase apf6 to yield N-methoxy-L-tryptophan. The synthesis of the fourth apf1 substrate is more complex. The fatty acid synthase apf5 is involved in the synthesis of the octanoic acid backbone of L-2-aminooctanedioic acid by fixing one acetyl-CoA unit and three malonyl-CoA units. Then one of the cytochrome P450 monooxygenases (apf7 or apf8) may oxidize this backbone to 2-oxooctanoic acid. The aminotransferase apf4 is predicted to catalyze the exchange of the keto group with an amino group. The next step would be the oxidation of 2-aminooctanoic acid by one of the cytochrome P450 monooxygenases (apf7 or apf8). The last step is the oxidation of 2-amino-8-hydroxyoctanoic acid to 2-aminooctanedioic acid is catalyzed by the FAD-dependent monooxygenase apf9. The sequence is that of FAD-linked oxidoreductase apf9 from Gibberella fujikuroi (strain CBS 195.34 / IMI 58289 / NRRL A-6831) (Bakanae and foot rot disease fungus).